A 576-amino-acid polypeptide reads, in one-letter code: Plant intracellular Ras-group-related LRR protein 4 (576 aa).

Residues 130–151 (AAPAAATTTTSTAAAGSSSSSA) are compositionally biased toward low complexity. The tract at residues 130–181 (AAPAAATTTTSTAAAGSSSSSAVGNAERHASSGTNGFTASRVAGTSTSTGRV) is disordered. Polar residues predominate over residues 160–180 (SSGTNGFTASRVAGTSTSTGR). LRR repeat units lie at residues 272 to 295 (LTGL…IGKL), 296 to 318 (FSLA…IGDL), 320 to 341 (SLIY…IGRL), 342 to 364 (LNLE…IGSL), 366 to 387 (RLKK…IGHC), 389 to 410 (SLVE…VGKL), 411 to 433 (EPLE…MASL), 434 to 456 (TKLK…FCFA), 458 to 481 (SLIK…IGNL), 482 to 503 (EMLE…SFGN), and 505 to 527 (KHLR…IALK). Positions 528–535 (GAQAVVQY) match the GVYW; degenerate motif.

The protein belongs to the SHOC2 family. Widely expressed.

Its function is as follows. Leucine-rich repeat protein that likely mediates protein interactions, possibly in the context of signal transduction. The sequence is that of Plant intracellular Ras-group-related LRR protein 4 (IRL4) from Oryza sativa subsp. japonica (Rice).